A 332-amino-acid chain; its full sequence is mRNA-decapping enzyme 1 (332 aa).

Residues 141–173 (ARAAKAASEAPQASVPAPTQAPAAPAQAPQMAP) show a composition bias toward low complexity. The segment at 141-175 (ARAAKAASEAPQASVPAPTQAPAAPAQAPQMAPQA) is disordered.

Belongs to the DCP1 family. In terms of assembly, may be a component of the decapping complex composed of dcap-1 and dcap-2. As to expression, expressed in neurons including touch receptor neurons and motor neurons.

The protein resides in the cytoplasm. It is found in the cytoplasmic granule. In terms of biological role, component of the decapping complex necessary for the degradation of mRNAs, both in normal mRNA turnover and in nonsense-mediated mRNA decay. In contrast to orthologs, does not possess decapping activity and does not remove the 7-methyl guanine cap structure from mRNA molecules. In the nervous system, negatively regulates the expression of insulin-like peptide ins-7, which in turn promotes longevity. This may in part be through promoting the activity of daf-16 in distal tissues. Required for the developmental axon guidance and regrowth of PLM touch receptor neurons. In ADL sensory neurons, plays a role in ciliary shape formation. Acts in neurons to promote larval survival at high temperatures by negatively regulating lin-14 expression. This is mRNA-decapping enzyme 1 from Caenorhabditis elegans.